The following is a 629-amino-acid chain: ATP-dependent DNA helicase II subunit 2 (629 aa).

The 223-residue stretch at 254–476 (SGLNRKTAVE…GHQIDELMEQ (223 aa)) folds into the Ku domain. Residues 608 to 620 (DLETLLKRGEQHS) show a composition bias toward basic and acidic residues. The segment at 608–629 (DLETLLKRGEQHSRGSPNNSNN) is disordered.

The protein belongs to the ku80 family. In terms of assembly, heterodimer of YKU70/HDF1 and YKU80/HDF2. Interacts with SIR4.

It is found in the nucleus. Its subcellular location is the chromosome. It localises to the telomere. The enzyme catalyses ATP + H2O = ADP + phosphate + H(+). Functionally, single-stranded DNA-dependent ATP-dependent helicase. Involved in non-homologous end joining (NHEJ) DNA double strand break repair. DNA-binding is sequence-independent but has a high affinity to nicks in double-stranded DNA and to the ends of duplex DNA. Binds to naturally occurring chromosomal ends, and therefore provides chromosomal end protection. Appears to have a role in recruitment of telomerase and CDC13 to the telomere and the subsequent telomere elongation. Required also for telomere recombination to repair telomeric ends in the absence of telomerase. KU70, of the KU70/KU80 heterodimer, binds to the stem loop of TLC1, the RNA component of telomerase. Involved in telomere maintenance. Interacts with telomeric repeats and subtelomeric sequences thereby controlling telomere length and protecting against subtelomeric rearrangement. Maintains telomeric chromatin, which is involved in silencing the expression of genes located at the telomere. Required for mating-type switching. The chain is ATP-dependent DNA helicase II subunit 2 (YKU80) from Saccharomyces cerevisiae (strain ATCC 204508 / S288c) (Baker's yeast).